Here is a 279-residue protein sequence, read N- to C-terminus: DegV domain-containing protein SA1258 (279 aa).

In terms of domain architecture, DegV spans 4-278; that stretch reads QIIVTDSTSD…QGAIGLVVLK (275 aa). Hexadecanoate contacts are provided by threonine 61 and serine 93.

Functionally, may bind long-chain fatty acids, such as palmitate, and may play a role in lipid transport or fatty acid metabolism. This is DegV domain-containing protein SA1258 from Staphylococcus aureus (strain N315).